The chain runs to 321 residues: Translation initiation factor eIF2B subunit alpha (321 aa).

This sequence belongs to the eIF-2B alpha/beta/delta subunits family. In terms of assembly, component of the translation initiation factor 2B (eIF2B) complex which is a heterodecamer of two sets of five different subunits: alpha, beta, gamma, delta and epsilon. Subunits alpha, beta and delta comprise a regulatory subcomplex and subunits epsilon and gamma comprise a catalytic subcomplex. Within the complex, the hexameric regulatory complex resides at the center, with the two heterodimeric catalytic subcomplexes bound on opposite sides.

It is found in the cytoplasm. It localises to the cytosol. Its function is as follows. Acts as a component of the translation initiation factor 2B (eIF2B) complex, which catalyzes the exchange of GDP for GTP on eukaryotic initiation factor 2 (eIF2) gamma subunit. Its guanine nucleotide exchange factor activity is repressed when bound to eIF2 complex phosphorylated on the alpha subunit, thereby limiting the amount of methionyl-initiator methionine tRNA available to the ribosome and consequently global translation is repressed. The protein is Translation initiation factor eIF2B subunit alpha (eif2b1) of Dictyostelium discoideum (Social amoeba).